The following is a 303-amino-acid chain: HTH-type transcriptional regulator YjiE (303 aa).

Residues 11–68 (IETKWLYDFLTLEKCRNFSQAAVSRNVSQPAFSRRIRALEQAIGVELFNRQVTPLQLS) enclose the HTH lysR-type domain. The segment at residues 28–47 (FSQAAVSRNVSQPAFSRRIR) is a DNA-binding region (H-T-H motif).

It belongs to the LysR transcriptional regulatory family. In terms of assembly, forms dimers, tetramers and possibly dodecameric complexes; oligomerization may be governed by cellular concentrations. DNA-binding seems to decrease oligomerization.

In terms of biological role, protects cells from HOCl (hypochlorite) stress but not peroxide or diamide stress. Decreases the intracellular load of reactive oxygen species by up-regulating genes involved in methionine and cysteine biosynthesis and down-regulating Fur-regulated genes involved in iron acquisition. Has also been suggested to down-regulate expression of the flagellar regulon, decreasing motility, but this activity was not confirmed in a second study. This is HTH-type transcriptional regulator YjiE (yjiE) from Escherichia coli (strain K12).